The primary structure comprises 347 residues: Ketol-acid reductoisomerase (NADP(+)) (347 aa).

The KARI N-terminal Rossmann domain maps to 1 to 185; that stretch reads MKIYYDEDAN…GGTRAGVLET (185 aa). Residues 24–27, Arg47, Ser50, Ser52, and 82–85 each bind NADP(+); these read YGSQ and DEFQ. Residue His107 is part of the active site. Residue Gly133 coordinates NADP(+). The KARI C-terminal knotted domain occupies 186–336; it reads SFKEETETDL…AELRSKMKFL (151 aa). 4 residues coordinate Mg(2+): Asp194, Glu198, Glu230, and Glu234. Ser255 serves as a coordination point for substrate.

It belongs to the ketol-acid reductoisomerase family. Mg(2+) is required as a cofactor.

The catalysed reaction is (2R)-2,3-dihydroxy-3-methylbutanoate + NADP(+) = (2S)-2-acetolactate + NADPH + H(+). It catalyses the reaction (2R,3R)-2,3-dihydroxy-3-methylpentanoate + NADP(+) = (S)-2-ethyl-2-hydroxy-3-oxobutanoate + NADPH + H(+). The protein operates within amino-acid biosynthesis; L-isoleucine biosynthesis; L-isoleucine from 2-oxobutanoate: step 2/4. It functions in the pathway amino-acid biosynthesis; L-valine biosynthesis; L-valine from pyruvate: step 2/4. Its function is as follows. Involved in the biosynthesis of branched-chain amino acids (BCAA). Catalyzes an alkyl-migration followed by a ketol-acid reduction of (S)-2-acetolactate (S2AL) to yield (R)-2,3-dihydroxy-isovalerate. In the isomerase reaction, S2AL is rearranged via a Mg-dependent methyl migration to produce 3-hydroxy-3-methyl-2-ketobutyrate (HMKB). In the reductase reaction, this 2-ketoacid undergoes a metal-dependent reduction by NADPH to yield (R)-2,3-dihydroxy-isovalerate. This Gamma-proteobacterium EBAC31A08 protein is Ketol-acid reductoisomerase (NADP(+)).